The following is a 271-amino-acid chain: D-methionine-binding lipoprotein MetQ (271 aa).

A signal peptide spans 1–22 (MSLKFKSIAAISALIGTLTLVG). A lipid anchor (N-palmitoyl cysteine) is attached at C23. C23 is lipidated: S-diacylglycerol cysteine.

Belongs to the NlpA lipoprotein family.

Its subcellular location is the cell membrane. This protein is a component of a D-methionine permease, a binding protein-dependent, ATP-driven transport system. The chain is D-methionine-binding lipoprotein MetQ (metQ) from Yersinia pestis.